The primary structure comprises 297 residues: 3-methyl-2-oxobutanoate hydroxymethyltransferase (297 aa).

The segment covering 1 to 15 (MSEQISEQSEQNVYG) has biased composition (polar residues). The interval 1–40 (MSEQISEQSEQNVYGASSPVPAGESSPSAASAPRTKVRTH) is disordered. Low complexity predominate over residues 16-33 (ASSPVPAGESSPSAASAP). Residues Asp78 and Asp117 each coordinate Mg(2+). Residues 78–79 (DS), Asp117, and Lys147 contribute to the 3-methyl-2-oxobutanoate site. Position 149 (Glu149) interacts with Mg(2+). The active-site Proton acceptor is the Glu215.

Belongs to the PanB family. As to quaternary structure, homodecamer; pentamer of dimers. It depends on Mg(2+) as a cofactor.

The protein resides in the cytoplasm. It catalyses the reaction 3-methyl-2-oxobutanoate + (6R)-5,10-methylene-5,6,7,8-tetrahydrofolate + H2O = 2-dehydropantoate + (6S)-5,6,7,8-tetrahydrofolate. The protein operates within cofactor biosynthesis; (R)-pantothenate biosynthesis; (R)-pantoate from 3-methyl-2-oxobutanoate: step 1/2. Its function is as follows. Catalyzes the reversible reaction in which hydroxymethyl group from 5,10-methylenetetrahydrofolate is transferred onto alpha-ketoisovalerate to form ketopantoate. This is 3-methyl-2-oxobutanoate hydroxymethyltransferase from Mycobacterium marinum (strain ATCC BAA-535 / M).